Consider the following 163-residue polypeptide: MTLRLAEHRDLEAVVAIYNSTIASRMVTADTEPVTPEDRMEWFSGHTESRPLYVAEDENGNVAAWISFETFYGRPAYNKTAEVSIYIDEACRGKGVGSYLLQEALRIAPNLGIRSLMAFIFGHNKPSLKLFEKHGFAEWGLFPGIAEMDGKRYDLKILGRELS.

One can recognise an N-acetyltransferase domain in the interval 1 to 158 (MTLRLAEHRD…DGKRYDLKIL (158 aa)). Acetyl-CoA contacts are provided by residues 85-87 (IYI), 94-98 (KGVGS), and 124-126 (NKP).

This sequence belongs to the acetyltransferase family. PAT/BAR subfamily.

It carries out the reaction phosphinothricin + acetyl-CoA = N-acetylphosphinothricin + CoA + H(+). Its function is as follows. This enzyme is an effector of phosphinothricin tripeptide (PTT or bialaphos) resistance. Inactivates PTT by transfer of an acetyl group. In Bacillus subtilis (strain 168), this protein is Putative phosphinothricin acetyltransferase YwnH (ywnH).